The primary structure comprises 305 residues: Protein hrde-2 (305 aa).

Disordered regions lie at residues 211-233 (AEMV…PVPA) and 267-305 (EMSN…EYCQ). The span at 215–227 (PSNTTGSSGSPMS) shows a compositional bias: polar residues. Acidic residues predominate over residues 268 to 287 (MSNDEYSPDESENDENEYDY). Over residues 289–305 (NAARYDDGYDEGHEYCQ) the composition is skewed to basic and acidic residues.

As to expression, expressed throughout the male and female germline.

It is found in the nucleus. In terms of biological role, plays a role in germline RNA interference (RNAi), and in particular is required for piwi-interacting RNA (piRNA) gene silencing. Facilitates the binding of the argonaut protein hrde-1 to small interfering RNAs (siRNAs) targets that are required for transgenerational epigenetic inheritance and germline immortality. This Caenorhabditis elegans protein is Protein hrde-2.